We begin with the raw amino-acid sequence, 675 residues long: DNA gyrase subunit B (675 aa).

A Toprim domain is found at 453–567 (SELYVVEGDS…NGHIFLAQPP (115 aa)). The Mg(2+) site is built by Glu459, Asp532, and Asp534.

The protein belongs to the type II topoisomerase GyrB family. As to quaternary structure, heterotetramer, composed of two GyrA and two GyrB chains. In the heterotetramer, GyrA contains the active site tyrosine that forms a transient covalent intermediate with DNA, while GyrB binds cofactors and catalyzes ATP hydrolysis. Mg(2+) serves as cofactor. It depends on Mn(2+) as a cofactor. Ca(2+) is required as a cofactor.

The protein resides in the cytoplasm. It catalyses the reaction ATP-dependent breakage, passage and rejoining of double-stranded DNA.. Its activity is regulated as follows. Inhibited by 4-quinoline drugs (nalidixic acid, ciprofloxacin, ofloxacin), although it is much less sensitive than the corresponding enzyme from E.coli. GyrB intrinsic ATPase activity inhibited by aminopyrazinamide and pyrrolamide derivatives. A type II topoisomerase that negatively supercoils closed circular double-stranded (ds) DNA in an ATP-dependent manner to modulate DNA topology and maintain chromosomes in an underwound state. Negative supercoiling favors strand separation, and DNA replication, transcription, recombination and repair, all of which involve strand separation. Also able to catalyze the interconversion of other topological isomers of dsDNA rings, including catenanes and knotted rings. Type II topoisomerases break and join 2 DNA strands simultaneously in an ATP-dependent manner. This is DNA gyrase subunit B from Mycolicibacterium smegmatis (strain ATCC 700084 / mc(2)155) (Mycobacterium smegmatis).